The sequence spans 89 residues: MKTSVMFMLVIVISLMCSGEAQEVARTYCGRHLADTLADLCFGVEKRGGAQYAPYFWTRQYLGSRGKRGVVDECCFRPCTLDVLLSYCG.

Positions 1–19 are cleaved as a signal peptide; the sequence is MKTSVMFMLVIVISLMCSG. 3 disulfide bridges follow: C29-C75, C41-C88, and C74-C79. Residues 48 to 66 constitute a propeptide, c peptide like; the sequence is GGAQYAPYFWTRQYLGSRG.

The protein belongs to the insulin family. Heterodimer of a B chain and an A chain linked by two disulfide bonds.

Its subcellular location is the secreted. Its function is as follows. Brain peptide responsible for activation of prothoracic glands to produce ecdysone in insects. This Bombyx mori (Silk moth) protein is Bombyxin B-1 (BBXB1).